We begin with the raw amino-acid sequence, 173 residues long: NADH-ubiquinone oxidoreductase chain 6 (173 aa).

Transmembrane regions (helical) follow at residues 24 to 44 (AMGL…GMFV), 47 to 67 (FWFS…LFIY), 81 to 101 (MKLF…SFFF), and 142 to 162 (LITL…VKIT).

It belongs to the complex I subunit 6 family.

It localises to the mitochondrion membrane. The enzyme catalyses a ubiquinone + NADH + 5 H(+)(in) = a ubiquinol + NAD(+) + 4 H(+)(out). Core subunit of the mitochondrial membrane respiratory chain NADH dehydrogenase (Complex I) that is believed to belong to the minimal assembly required for catalysis. Complex I functions in the transfer of electrons from NADH to the respiratory chain. The immediate electron acceptor for the enzyme is believed to be ubiquinone. This Aedes aegypti (Yellowfever mosquito) protein is NADH-ubiquinone oxidoreductase chain 6.